We begin with the raw amino-acid sequence, 211 residues long: Soluble inorganic pyrophosphatase PPA1 (211 aa).

Substrate contacts are provided by Lys61 and Arg75. The active-site Proton donor is the Tyr83. Residue Tyr87 participates in substrate binding. Residues Asp97, Asp102, and Asp134 each contribute to the Mg(2+) site. Tyr171 is a binding site for substrate.

It belongs to the PPase family. Mg(2+) serves as cofactor.

Its subcellular location is the cytoplasm. It catalyses the reaction diphosphate + H2O = 2 phosphate + H(+). With respect to regulation, strongly inhibited by Ca(2+). Its function is as follows. Catalyzes the irreversible hydrolysis of pyrophosphate (PPi) to phosphate. The sequence is that of Soluble inorganic pyrophosphatase PPA1 from Solanum tuberosum (Potato).